The following is a 268-amino-acid chain: Tryptophan synthase alpha chain (268 aa).

Active-site proton acceptor residues include glutamate 49 and aspartate 60.

The protein belongs to the TrpA family. In terms of assembly, tetramer of two alpha and two beta chains.

It catalyses the reaction (1S,2R)-1-C-(indol-3-yl)glycerol 3-phosphate + L-serine = D-glyceraldehyde 3-phosphate + L-tryptophan + H2O. It functions in the pathway amino-acid biosynthesis; L-tryptophan biosynthesis; L-tryptophan from chorismate: step 5/5. In terms of biological role, the alpha subunit is responsible for the aldol cleavage of indoleglycerol phosphate to indole and glyceraldehyde 3-phosphate. This chain is Tryptophan synthase alpha chain, found in Aliivibrio fischeri (strain ATCC 700601 / ES114) (Vibrio fischeri).